The following is a 297-amino-acid chain: N-acetylmuramic acid 6-phosphate etherase (297 aa).

The SIS domain maps to 55–218; the sequence is AAAALKSGGR…STGAMVKFGK (164 aa). Glu-83 acts as the Proton donor in catalysis. The active site involves Glu-114.

It belongs to the GCKR-like family. MurNAc-6-P etherase subfamily. In terms of assembly, homodimer.

The catalysed reaction is N-acetyl-D-muramate 6-phosphate + H2O = N-acetyl-D-glucosamine 6-phosphate + (R)-lactate. It functions in the pathway amino-sugar metabolism; 1,6-anhydro-N-acetylmuramate degradation. It participates in amino-sugar metabolism; N-acetylmuramate degradation. The protein operates within cell wall biogenesis; peptidoglycan recycling. In terms of biological role, specifically catalyzes the cleavage of the D-lactyl ether substituent of MurNAc 6-phosphate, producing GlcNAc 6-phosphate and D-lactate. Together with AnmK, is also required for the utilization of anhydro-N-acetylmuramic acid (anhMurNAc) either imported from the medium or derived from its own cell wall murein, and thus plays a role in cell wall recycling. The polypeptide is N-acetylmuramic acid 6-phosphate etherase (Salmonella typhi).